The chain runs to 265 residues: Orotidine 5'-phosphate decarboxylase (265 aa).

Substrate is bound by residues Asp37, 59–61, 91–100, Tyr217, and Arg235; these read KTH and DRKFADIGNT. Lys93 serves as the catalytic Proton donor.

It belongs to the OMP decarboxylase family.

The enzyme catalyses orotidine 5'-phosphate + H(+) = UMP + CO2. Its pathway is pyrimidine metabolism; UMP biosynthesis via de novo pathway; UMP from orotate: step 2/2. The protein is Orotidine 5'-phosphate decarboxylase (URA3) of Diutina rugosa (Yeast).